Reading from the N-terminus, the 603-residue chain is Isovalerate--CoA ligase AAE2 (603 aa).

Belongs to the ATP-dependent AMP-binding enzyme family. As to expression, expressed at low levels in leaves, flowers and developing seeds.

It carries out the reaction 3-methylbutanoate + ATP + CoA = 3-methylbutanoyl-CoA + AMP + diphosphate. The enzyme catalyses hexanoate + ATP + CoA = hexanoyl-CoA + AMP + diphosphate. It catalyses the reaction butanoate + ATP + CoA = butanoyl-CoA + AMP + diphosphate. The catalysed reaction is pentanoate + ATP + CoA = pentanoyl-CoA + AMP + diphosphate. It carries out the reaction 3-methylpentanoate + ATP + CoA = 3-methylpentanoyl-CoA + AMP + diphosphate. The enzyme catalyses 4-methylpentanoate + ATP + CoA = 4-methylpentanoyl-CoA + AMP + diphosphate. In terms of biological role, catalyzes the ligation of CoA on isovalerate to produce 3-methylbutanoyl-CoA. Can also use butanoate, pentanoate, hexanoate, 3-methylpentanoate and 4-methylpentanoate as substrates with a lower efficiency. In Arabidopsis thaliana (Mouse-ear cress), this protein is Isovalerate--CoA ligase AAE2.